We begin with the raw amino-acid sequence, 94 residues long: Putative regulatory protein THA_332 (94 aa).

It belongs to the RemA family.

This chain is Putative regulatory protein THA_332, found in Thermosipho africanus (strain TCF52B).